The chain runs to 286 residues: Thymidylate synthase (286 aa).

140–141 contacts dUMP; the sequence is RR. The active-site Nucleophile is Cys-161. DUMP-binding positions include 185–188, Asn-196, and 226–228; these read RSND and HIY. Asp-188 is a (6R)-5,10-methylene-5,6,7,8-tetrahydrofolate binding site. A (6R)-5,10-methylene-5,6,7,8-tetrahydrofolate-binding site is contributed by Ala-285.

It belongs to the thymidylate synthase family. Bacterial-type ThyA subfamily. Homodimer.

Its subcellular location is the cytoplasm. The catalysed reaction is dUMP + (6R)-5,10-methylene-5,6,7,8-tetrahydrofolate = 7,8-dihydrofolate + dTMP. It participates in pyrimidine metabolism; dTTP biosynthesis. Functionally, catalyzes the reductive methylation of 2'-deoxyuridine-5'-monophosphate (dUMP) to 2'-deoxythymidine-5'-monophosphate (dTMP) while utilizing 5,10-methylenetetrahydrofolate (mTHF) as the methyl donor and reductant in the reaction, yielding dihydrofolate (DHF) as a by-product. This enzymatic reaction provides an intracellular de novo source of dTMP, an essential precursor for DNA biosynthesis. The polypeptide is Thymidylate synthase (Streptococcus thermophilus (strain ATCC BAA-491 / LMD-9)).